Consider the following 483-residue polypeptide: Adenylyltransferase and sulfurtransferase uba4 (483 aa).

ATP contacts are provided by residues Gly100, Asp121, 128 to 132 (SNLHR), Lys145, and 178 to 179 (DN). Residues Cys227 and Cys230 each coordinate Zn(2+). The active-site Glycyl thioester intermediate; for adenylyltransferase activity is Cys244. Zn(2+)-binding residues include Cys306 and Cys309. Positions 366-481 (ISKEPTIIDV…WREQIDPDWP (116 aa)) constitute a Rhodanese domain. The Cysteine persulfide intermediate; for sulfurtransferase activity role is filled by Cys436.

In the N-terminal section; belongs to the HesA/MoeB/ThiF family. UBA4 subfamily. Zn(2+) is required as a cofactor.

Its subcellular location is the cytoplasm. It localises to the cytosol. It catalyses the reaction [molybdopterin-synthase sulfur-carrier protein]-C-terminal Gly-Gly + ATP + H(+) = [molybdopterin-synthase sulfur-carrier protein]-C-terminal Gly-Gly-AMP + diphosphate. The enzyme catalyses [molybdopterin-synthase sulfur-carrier protein]-C-terminal Gly-Gly-AMP + S-sulfanyl-L-cysteinyl-[cysteine desulfurase] + AH2 = [molybdopterin-synthase sulfur-carrier protein]-C-terminal-Gly-aminoethanethioate + L-cysteinyl-[cysteine desulfurase] + A + AMP + 2 H(+). The protein operates within tRNA modification; 5-methoxycarbonylmethyl-2-thiouridine-tRNA biosynthesis. In terms of biological role, plays a central role in 2-thiolation of mcm(5)S(2)U at tRNA wobble positions of cytosolic tRNA(Lys), tRNA(Glu) and tRNA(Gln). Also essential during biosynthesis of the molybdenum cofactor. Acts by mediating the C-terminal thiocarboxylation of sulfur carriers urm1 and mocs2a. Its N-terminus first activates urm1 and mocs2a as acyl-adenylates (-COAMP), then the persulfide sulfur on the catalytic cysteine is transferred to urm1 and mocs2a to form thiocarboxylation (-COSH) of their C-terminus. The reaction probably involves hydrogen sulfide that is generated from the persulfide intermediate and that acts as a nucleophile towards urm1 and mocs2a. Subsequently, a transient disulfide bond is formed. Does not use thiosulfate as sulfur donor; nfs1 probably acting as a sulfur donor for thiocarboxylation reactions. This is Adenylyltransferase and sulfurtransferase uba4 from Neosartorya fischeri (strain ATCC 1020 / DSM 3700 / CBS 544.65 / FGSC A1164 / JCM 1740 / NRRL 181 / WB 181) (Aspergillus fischerianus).